The chain runs to 743 residues: Putative metallophosphoesterase At3g03305 (743 aa).

Positions 1–40 (MESIGDDDELRSKTVSLPRRISFTILLLLLLISLSTRVSG) are cleaved as a signal peptide. The a divalent metal cation site is built by Asp-66, His-68, and Asp-101. Transmembrane regions (helical) follow at residues 514 to 534 (ILWP…CIII), 565 to 585 (MPVV…FPWF), 623 to 643 (VMVV…LVVC), 687 to 704 (LFRK…WKHF), and 716 to 736 (MNVV…LYVI).

The protein belongs to the metallophosphoesterase superfamily. A divalent metal cation serves as cofactor.

It is found in the membrane. This is Putative metallophosphoesterase At3g03305 from Arabidopsis thaliana (Mouse-ear cress).